Consider the following 60-residue polypeptide: Large ribosomal subunit protein uL30 (60 aa).

It belongs to the universal ribosomal protein uL30 family. In terms of assembly, part of the 50S ribosomal subunit.

This Streptococcus thermophilus (strain CNRZ 1066) protein is Large ribosomal subunit protein uL30.